Reading from the N-terminus, the 323-residue chain is Ubiquinone biosynthesis protein COQ4, mitochondrial (323 aa).

Residues His203, Asp204, His207, and Glu219 each contribute to the Zn(2+) site.

Belongs to the COQ4 family. As to quaternary structure, component of a multi-subunit COQ enzyme complex, composed of at least COQ3, COQ4, COQ5, COQ6, COQ7 and COQ9. Requires Zn(2+) as cofactor.

Its subcellular location is the mitochondrion inner membrane. The enzyme catalyses a 4-hydroxy-3-methoxy-5-(all-trans-polyprenyl)benzoate + H(+) = a 2-methoxy-6-(all-trans-polyprenyl)phenol + CO2. The protein operates within cofactor biosynthesis; ubiquinone biosynthesis. Its function is as follows. Lyase that catalyzes the C1-decarboxylation of 4-hydroxy-3-methoxy-5-(all-trans-polyprenyl)benzoic acid into 2-methoxy-6-(all-trans-polyprenyl)phenol during ubiquinone biosynthesis. This Eremothecium gossypii (strain ATCC 10895 / CBS 109.51 / FGSC 9923 / NRRL Y-1056) (Yeast) protein is Ubiquinone biosynthesis protein COQ4, mitochondrial.